Consider the following 242-residue polypeptide: Ribosomal RNA small subunit methyltransferase G (242 aa).

S-adenosyl-L-methionine-binding positions include G78, L83, 130-131, and R151; that span reads AE.

Belongs to the methyltransferase superfamily. RNA methyltransferase RsmG family.

The protein resides in the cytoplasm. Specifically methylates the N7 position of guanine in position 518 of 16S rRNA. This chain is Ribosomal RNA small subunit methyltransferase G, found in Salinispora arenicola (strain CNS-205).